The chain runs to 338 residues: 1-aminocyclopropane-1-carboxylate deaminase (338 aa).

Lysine 51 carries the post-translational modification N6-(pyridoxal phosphate)lysine. Residue serine 78 is the Nucleophile of the active site.

It belongs to the ACC deaminase/D-cysteine desulfhydrase family. It depends on pyridoxal 5'-phosphate as a cofactor.

The enzyme catalyses 1-aminocyclopropane-1-carboxylate + H2O = 2-oxobutanoate + NH4(+). In terms of biological role, catalyzes a cyclopropane ring-opening reaction, the irreversible conversion of 1-aminocyclopropane-1-carboxylate (ACC) to ammonia and alpha-ketobutyrate. Allows growth on ACC as a nitrogen source. This Enterobacter cloacae protein is 1-aminocyclopropane-1-carboxylate deaminase.